The chain runs to 332 residues: Processive diacylglycerol alpha-glucosyltransferase (332 aa).

It belongs to the glycosyltransferase group 1 family. Glycosyltransferase 4 subfamily. Mg(2+) serves as cofactor.

Its subcellular location is the cell membrane. The catalysed reaction is a 1,2-diacyl-sn-glycerol + UDP-alpha-D-glucose = a 1,2-diacyl-3-O-(alpha-D-glucopyranosyl)-sn-glycerol + UDP + H(+). It carries out the reaction a 1,2-diacyl-3-O-(alpha-D-glucopyranosyl)-sn-glycerol + UDP-alpha-D-glucose = a 1,2-diacyl-3-O-[alpha-D-glucosyl-(1-&gt; 2)-alpha-D-glucosyl]-sn-glycerol + UDP + H(+). The protein operates within glycolipid metabolism; diglucosyl-diacylglycerol biosynthesis. Its activity is regulated as follows. Activated by the negatively charged lipids phosphatidylglycerol (PG), cardiolipin (CL), nonbilayer-prone 1,3-DAG, 1,2-dioleoylphosphatidylglycerol (DOPG) and 1,2-dioleoylphosphatidylserine (DOPS). Inhibited by 1,2-diacyl-3-O-(alpha-D-galactopyranosyl)-sn-glycerol, 1,2-diacyl-3-O-[6-O-acyl(alpha-D-glucopyranosyl)]-sn-glycerol and 1,2-diacyl-3-O-[alpha-D-glucopyranosyl-(1-&gt;2)-O-(6-O-acyl-alpha-D-glucopyranosyl)]-sn-glycerol. In terms of biological role, processive glucosyltransferase involved in the biosynthesis of both the non-bilayer-prone alpha-monoglucosyldiacylglycerol and the bilayer-forming membrane lipid alpha-diglucosyldiacylglycerol. These are major components for maintaining the anionic lipid surface charge density, for balancing the bilayer to non-bilayer phase equilibria and for keeping a constant lipid bilayer spontaneous curvature (curvature packing stress). Catalyzes the transfer of a glucosyl residue from UDP-Glc to diacylglycerol (DAG) acceptor to form the corresponding alpha-glucosyl-DAG (1,2-diacyl-3-O-(alpha-D-glucopyranosyl)-sn-glycerol), which then acts as acceptor to give alpha-diglucosyl-DAG product (3-O-(alpha-D-glucopyranosyl-alpha-(1-&gt;2)-D-glucopyranosyl)-1,2-diacyl-sn-glycerol). It can only use UDP-Glc as sugar donor. This Acholeplasma laidlawii protein is Processive diacylglycerol alpha-glucosyltransferase (dgs).